The sequence spans 901 residues: HTH-type transcriptional regulator MalT (901 aa).

39-46 is a binding site for ATP; sequence SPAGYGKT. The region spanning 829–894 is the HTH luxR-type domain; sequence ELIRTSPLTQ…DAVQHAQQLL (66 aa). A DNA-binding region (H-T-H motif) is located at residues 853-872; sequence NEQIAGELDVAATTIKTHIR.

It belongs to the MalT family. Monomer in solution. Oligomerizes to an active state in the presence of the positive effectors ATP and maltotriose.

Activated by ATP and maltotriose, which are both required for DNA binding. Functionally, positively regulates the transcription of the maltose regulon whose gene products are responsible for uptake and catabolism of malto-oligosaccharides. Specifically binds to the promoter region of its target genes, recognizing a short DNA motif called the MalT box. This is HTH-type transcriptional regulator MalT from Klebsiella pneumoniae subsp. pneumoniae (strain ATCC 700721 / MGH 78578).